The chain runs to 466 residues: Glutamate decarboxylase alpha (466 aa).

Substrate-binding residues include threonine 62 and asparagine 83. Pyridoxal 5'-phosphate is bound by residues 126–127 (SS), threonine 212, and histidine 275. Lysine 276 is modified (N6-(pyridoxal phosphate)lysine).

It belongs to the group II decarboxylase family. In terms of assembly, homohexamer. Requires pyridoxal 5'-phosphate as cofactor.

It carries out the reaction L-glutamate + H(+) = 4-aminobutanoate + CO2. In terms of biological role, converts glutamate to gamma-aminobutyrate (GABA), consuming one intracellular proton in the reaction. The gad system helps to maintain a near-neutral intracellular pH when cells are exposed to extremely acidic conditions. The ability to survive transit through the acidic conditions of the stomach is essential for successful colonization of the mammalian host by commensal and pathogenic bacteria. The protein is Glutamate decarboxylase alpha (gadA) of Escherichia coli O6:H1 (strain CFT073 / ATCC 700928 / UPEC).